Reading from the N-terminus, the 302-residue chain is GATA transcription factor 28 (302 aa).

A disordered region spans residues 47–66; it reads NAGGMSEGVETDIPSHPGNV. Residues 77-112 enclose the Tify domain; the sequence is GSEQGDQLTLSFQGQVYVFDSVLPEKVQAVLLLLGG. A disordered region spans residues 119–141; sequence APPGLGSPHQNNRVSSLPGTPQR. Positions 126 to 141 are enriched in polar residues; that stretch reads PHQNNRVSSLPGTPQR. The region spanning 147-189 is the CCT domain; it reads RLASLVRFREKRKGRNFDKKIRYTVRKEVALRMQRNKGQFTSA. A GATA-type zinc finger spans residues 217 to 273; sequence QHQEISCRHCGIGEKSTPMMRRGPAGPRTLCNACGLMWANKGAFRDLSKASPQTAQN.

The protein belongs to the type IV zinc-finger family. Class C subfamily. Predominantly expressed in shoot apices, inflorescences and roots.

Its subcellular location is the nucleus. Transcriptional activator that specifically binds 5'-GATA-3' or 5'-GAT-3' motifs within gene promoters. The sequence is that of GATA transcription factor 28 (GATA28) from Arabidopsis thaliana (Mouse-ear cress).